The primary structure comprises 597 residues: Probable methyltransferase-like protein 25 (597 aa).

A compositionally biased stretch (basic and acidic residues) spans 245–254 (ECKGDAESVQ). Disordered regions lie at residues 245 to 265 (ECKGDAESVQRSRLGNPDLSA) and 317 to 342 (TSSQVQNTEKSGLRKERRNTASKARD). Residues 317–326 (TSSQVQNTEK) are compositionally biased toward polar residues.

Functionally, probable methyltransferase. This chain is Probable methyltransferase-like protein 25 (Mettl25), found in Mus musculus (Mouse).